A 327-amino-acid polypeptide reads, in one-letter code: Probable cell division protein WhiA (327 aa).

Residues 275–308 (SLEELGRLADPPMTKDAVAGRIRRLLSMADRKAK) constitute a DNA-binding region (H-T-H motif).

The protein belongs to the WhiA family.

Its function is as follows. Involved in cell division and chromosome segregation. This is Probable cell division protein WhiA from Mycobacterium avium (strain 104).